The following is a 161-amino-acid chain: Dehydrin DHN3 (161 aa).

Positions 1 to 12 are enriched in basic and acidic residues; that stretch reads MEHGHATNRVDE. The segment at 1–161 is disordered; it reads MEHGHATNRV…KIKEKLPGQH (161 aa). The segment covering 20–38 has biased composition (gly residues); sequence HGVGTGMGAHGGVGTGAAA. Low complexity-rich tracts occupy residues 93–107 and 115–130; these read DQQQTGGTYGQHGHT and HGATATGGTYGQQGHT. 2 consecutive repeat copies span residues 101–123 and 124–144. The interval 101–144 is 2 X approximate tandem repeats; it reads YGQHGHTGMTGTGEHGATATGGTYGQQGHTGMTGTGAHGTDGTG. Gly residues predominate over residues 131–142; that stretch reads GMTGTGAHGTDG. Residues 143-161 show a composition bias toward basic and acidic residues; sequence TGEKKGIMDKIKEKLPGQH.

Belongs to the plant dehydrin family.

In Hordeum vulgare (Barley), this protein is Dehydrin DHN3 (DHN3).